The following is a 513-amino-acid chain: DNA damage-binding protein CMR1 (513 aa).

A compositionally biased stretch (basic and acidic residues) spans 35-45; it reads RSEAGIEDHRK. The interval 35–103 is disordered; the sequence is RSEAGIEDHR…TAQNVKQEEE (69 aa). WD repeat units lie at residues 183–224, 237–277, 329–369, 386–425, 438–477, and 478–513; these read IVHE…PDPE, LFSR…SDEL, LSDK…AKPD, NSRLSVSAVSYAPIDHTLVCNGYDNTVRLFNARADLPSEL, GRWVSVLKARFKLNMDVFAIANMKRAIDIYTSRGEQLSHL, and ETSTVPAVVSWHPMQNWIVGGNNSGKVFLFTDAPQE.

The protein belongs to the WD repeat DDB2/WDR76 family.

Functionally, DNA-binding protein that binds to both single- and double-stranded DNA. Binds preferentially to UV-damaged DNA. May be involved in DNA-metabolic processes. The polypeptide is DNA damage-binding protein CMR1 (Eremothecium gossypii (strain ATCC 10895 / CBS 109.51 / FGSC 9923 / NRRL Y-1056) (Yeast)).